We begin with the raw amino-acid sequence, 35 residues long: Photosystem II reaction center protein T (35 aa).

The chain crosses the membrane as a helical span at residues 3–23 (ALVYTFLLVSTLGIIFFAIFF).

It belongs to the PsbT family. PSII is composed of 1 copy each of membrane proteins PsbA, PsbB, PsbC, PsbD, PsbE, PsbF, PsbH, PsbI, PsbJ, PsbK, PsbL, PsbM, PsbT, PsbY, PsbZ, Psb30/Ycf12, at least 3 peripheral proteins of the oxygen-evolving complex and a large number of cofactors. It forms dimeric complexes.

It localises to the plastid. The protein localises to the chloroplast thylakoid membrane. In terms of biological role, found at the monomer-monomer interface of the photosystem II (PS II) dimer, plays a role in assembly and dimerization of PSII. PSII is a light-driven water plastoquinone oxidoreductase, using light energy to abstract electrons from H(2)O, generating a proton gradient subsequently used for ATP formation. The sequence is that of Photosystem II reaction center protein T from Saururus cernuus (Lizard's tail).